We begin with the raw amino-acid sequence, 808 residues long: PH domain-containing protein DDB_G0275795 (808 aa).

The stretch at 57–121 forms a coiled coil; sequence ENLEILKEIK…RNRQASQQEL (65 aa). Residues 108–120 show a composition bias toward polar residues; the sequence is ESTTRNRQASQQE. Disordered stretches follow at residues 108-127, 228-325, 339-375, 405-475, 523-542, and 645-675; these read ESTT…PPIL, GANA…QDEE, EKLK…QLQS, QQQQ…NGSN, DQTK…ELKK, and KGGG…SNTD. The 93-residue stretch at 124–216 folds into the PH domain; sequence PPILSGYLKK…WTEGLKEFKK (93 aa). The segment covering 228–248 has biased composition (low complexity); the sequence is GANANGNGNSSPNMSSSGSYS. The span at 255–274 shows a compositional bias: polar residues; it reads ESSQQPLNSSTGAINTTPQR. Positions 293 to 321 are enriched in low complexity; it reads SHSSSSTAPDSPTLSSSYVPPPSSSNLNP. The stretch at 322–412 forms a coiled coil; the sequence is QDEELKRREN…QQQQQQQQQQ (91 aa). Positions 339 to 353 are enriched in basic and acidic residues; it reads EKLKQQDDQQQDDKQ. 2 stretches are compositionally biased toward low complexity: residues 354 to 375 and 405 to 414; these read QQQQ…QLQS and QQQQQQQQPP. Positions 417-428 are enriched in polar residues; it reads SPQNSRHGSTNY. Low complexity predominate over residues 429–449; that stretch reads SQLQQQQQQPQQQPQQQSSPQ. The span at 450–475 shows a compositional bias: polar residues; that stretch reads VIISNNNSPRFESQQQQNNFHNNGSN. The stretch at 487–645 forms a coiled coil; that stretch reads DELNKKFLKE…DKYINELLEK (159 aa). Residues 525–542 show a composition bias toward basic and acidic residues; sequence TKTDAEEKQNKSSNELKK. Residues 654 to 673 are compositionally biased toward low complexity; the sequence is NSNNNNNSNNNNNNSNNNSN. Residues 678-734 adopt a coiled-coil conformation; sequence KESMVAHQTQNAFLLQEIQRLETQSQFKLDIKIQQIEELENQLEQQLYQFHRFREAI.

This is PH domain-containing protein DDB_G0275795 from Dictyostelium discoideum (Social amoeba).